The sequence spans 393 residues: Capsid protein (393 aa).

Residues 5–69 (DLIEKQNRLA…ENELNAQEEK (65 aa)) adopt a coiled-coil conformation.

Belongs to the Skunalikevirus capsid protein family. In terms of assembly, homomultimer. Post-translationally, probably cleaved by the viral protease during maturation.

Its subcellular location is the virion. Functionally, capsid protein self-assembles to form an icosahedral capsid with a T=7 symmetry, about 69 nm in diameter, and consisting of 60 capsid proteins hexamers and 11 pentamers. The capsid encapsulates the genomic DNA. The chain is Capsid protein from Lactococcus phage p2 (Lactococcus lactis bacteriophage p2).